Consider the following 174-residue polypeptide: Large ribosomal subunit protein uL10 (174 aa).

This sequence belongs to the universal ribosomal protein uL10 family. As to quaternary structure, part of the ribosomal stalk of the 50S ribosomal subunit. The N-terminus interacts with L11 and the large rRNA to form the base of the stalk. The C-terminus forms an elongated spine to which L12 dimers bind in a sequential fashion forming a multimeric L10(L12)X complex.

In terms of biological role, forms part of the ribosomal stalk, playing a central role in the interaction of the ribosome with GTP-bound translation factors. In Anaeromyxobacter dehalogenans (strain 2CP-1 / ATCC BAA-258), this protein is Large ribosomal subunit protein uL10.